A 758-amino-acid polypeptide reads, in one-letter code: Microtubule-associated protein tau (758 aa).

The segment covering 1-26 has biased composition (basic and acidic residues); it reads MAEPRQEFEVMEDHAGTYGLGDRKDQ. The disordered stretch occupies residues 1 to 573; sequence MAEPRQEFEV…PVPMPDLKNV (573 aa). The residue at position 2 (Ala2) is an N-acetylalanine. The residue at position 18 (Tyr18) is a Phosphotyrosine; by FYN. Position 29 is a phosphotyrosine (Tyr29). A Glycyl lysine isopeptide (Lys-Gly) (interchain with G-Cter in ubiquitin) cross-link involves residue Lys44. Phosphoserine is present on residues Ser46 and Ser61. The span at 61-71 shows a compositional bias: polar residues; it reads SETSDAKSTPT. 2 positions are modified to phosphothreonine: Thr69 and Thr71. N-linked (Glc) (glycation) lysine; in PHF-tau; in vitro glycosylation occurs at Lys87. Thr111 carries the phosphothreonine modification. Composition is skewed to basic and acidic residues over residues 179 to 189 and 207 to 216; these read EGGRHAPELLK and GGKERPGSKE. Phosphoserine; by SGK1 is present on Ser214. Over residues 217 to 228 the composition is skewed to acidic residues; that stretch reads EVDEDRDVDESS. The span at 314–323 shows a compositional bias: basic and acidic residues; sequence EQAHSEEHLG. The segment covering 324-340 has biased composition (low complexity); it reads RAAFPGAPGEGPEARGP. Basic and acidic residues-rich tracts occupy residues 344–356 and 381–393; these read EDTK…EPSE and KSKD…DKKA. N-linked (Glc) (glycation) lysine; in PHF-tau; in vitro glycosylation is present at Lys383. Residues 442-453 are compositionally biased toward low complexity; it reads VSSVTSRTGSSG. A compositionally biased stretch (basic and acidic residues) spans 455 to 466; the sequence is KEMKLKGADGKT. Lys467 carries an N-linked (Glc) (glycation) lysine; in PHF-tau; in vitro glycan. Residue Thr470 is modified to Phosphothreonine; by PDPK1. Arg472 carries the omega-N-methylarginine modification. N-linked (Glc) (glycation) lysine; in PHF-tau; in vitro glycosylation is present at Lys480. Lys480 is modified (N6,N6-dimethyllysine; alternate). Lys480 bears the N6-acetyllysine; alternate mark. Residue Asn484 is modified to Deamidated asparagine; in tau and PHF-tau; partial. Residue Thr486 is modified to Phosphothreonine. Lys491 carries N-linked (Glc) (glycation) lysine; in PHF-tau; in vitro glycosylation. Over residues 491–503 the composition is skewed to pro residues; the sequence is KTPPAPKTPPSSG. At Thr492 the chain carries Phosphothreonine. The residue at position 498 (Thr498) is a Phosphothreonine; by PDPK1. Residues Ser502, Ser508, and Ser512 each carry the phosphoserine modification. The span at 504–531 shows a compositional bias: low complexity; the sequence is EPPKSGDRSGYSSPGSPGTPGSRSRTPS. Position 514 is a phosphotyrosine; by TTBK1 (Tyr514). 2 positions are modified to phosphoserine; by PDPK1 and TTBK1: Ser515 and Ser516. A Phosphoserine; by CK1, PDPK1 and TTBK1 modification is found at Ser519. Thr522 carries the post-translational modification Phosphothreonine; by CK1 and PDPK1. The O-linked (GlcNAc) serine glycan is linked to Ser525. Thr529 is subject to Phosphothreonine; by BRSK1, BRSK2, DYRK2 and PDPK1. Ser531 is subject to Phosphoserine; by PKA. Phosphothreonine; by PDPK1 is present on Thr534. Lys542 carries an N-linked (Glc) (glycation) lysine; in PHF-tau; in vitro glycan. N6-acetyllysine is present on Lys542. Position 548 is a phosphothreonine; by GSK3-beta and PDPK1 (Thr548). N-linked (Glc) (glycation) lysine; in PHF-tau; in vitro glycosylation occurs at Lys551. Ser552 bears the Phosphoserine; by PDPK1 mark. Ser554 is subject to Phosphoserine; by PHK. O-linked (GlcNAc) serine glycosylation occurs at Ser555. Tau/MAP repeat units follow at residues 561–591, 592–622, 623–653, and 654–685; these read QTAP…GGGK, VQII…GGGS, VQIV…GGGQ, and VEVK…GGGN. A microtubule-binding domain region spans residues 561 to 685; sequence QTAPVPMPDL…NITHVPGGGN (125 aa). Lys571 is covalently cross-linked (Glycyl lysine isopeptide (Lys-Gly) (interchain with G-Cter in ubiquitin); in PHF-tau). Lys576 carries N-linked (Glc) (glycation) lysine; in PHF-tau; in vitro glycosylation. At Lys576 the chain carries N6-acetyllysine; alternate. Lys576 carries the N6-methyllysine; alternate modification. Residue Lys576 forms a Glycyl lysine isopeptide (Lys-Gly) (interchain with G-Cter in ubiquitin); alternate linkage. The residue at position 579 (Ser579) is a Phosphoserine; by MARK1, MARK2, MARK3, MARK4, BRSK1, BRSK2 and PHK. Lys584 participates in a covalent cross-link: Glycyl lysine isopeptide (Lys-Gly) (interchain with G-Cter in ubiquitin). Residue Asn596 is modified to Deamidated asparagine; in tau and PHF-tau; partial. 2 N-linked (Glc) (glycation) lysine; in PHF-tau; in vitro glycosylation sites follow: Lys597 and Lys598. At Lys598 the chain carries N6-acetyllysine; alternate. A Glycyl lysine isopeptide (Lys-Gly) (interchain with G-Cter in ubiquitin); alternate cross-link involves residue Lys598. Residue Ser602 is modified to Phosphoserine; by PHK. At Lys607 the chain carries N6-acetyllysine. A disulfide bridge connects residues Cys608 and Cys639. Ser610 bears the Phosphoserine mark. The residue at position 615 (Lys615) is an N6-acetyllysine; alternate. Lys615 is covalently cross-linked (Glycyl lysine isopeptide (Lys-Gly) (interchain with G-Cter in ubiquitin); alternate). Residue Ser622 is modified to Phosphoserine; by PHK. Lys628 is modified (N6,N6-dimethyllysine; alternate). 3 positions are modified to N6-acetyllysine; alternate: Lys628, Lys634, and Lys638. Lys628 is covalently cross-linked (Glycyl lysine isopeptide (Lys-Gly) (interchain with G-Cter in ubiquitin); in PHF-tau). Residues Lys634 and Lys638 each participate in a glycyl lysine isopeptide (Lys-Gly) (interchain with G-Cter in ubiquitin); alternate cross-link. Ser641 is subject to Phosphoserine. N6-acetyllysine; alternate occurs at positions 648, 660, and 664. Glycyl lysine isopeptide (Lys-Gly) (interchain with G-Cter in ubiquitin); alternate cross-links involve residues Lys648, Lys660, and Lys664. A glycan (N-linked (Glc) (glycation) lysine; in PHF-tau; in vitro) is linked at Lys664. The residue at position 666 (Arg666) is an Omega-N-methylarginine. Residue Ser669 is modified to Phosphoserine; by PHK. N-linked (Glc) (glycation) lysine; in PHF-tau; in vitro glycosylation occurs at Lys670. Lys670 is covalently cross-linked (Glycyl lysine isopeptide (Lys-Gly) (interchain with G-Cter in ubiquitin); in PHF-tau). Ser673 bears the Phosphoserine mark. N-linked (Glc) (glycation) lysine; in PHF-tau; in vitro glycosylation is present at Lys686. Residue Lys686 is modified to N6-acetyllysine; alternate. Lys686 participates in a covalent cross-link: Glycyl lysine isopeptide (Lys-Gly) (interchain with G-Cter in ubiquitin); alternate. Lys692 participates in a covalent cross-link: Glycyl lysine isopeptide (Lys-Gly) (interchain with G-Cter in ubiquitin). N6-acetyllysine; alternate is present on Lys702. Residue Lys702 forms a Glycyl lysine isopeptide (Lys-Gly) (interchain with G-Cter in ubiquitin); alternate linkage. Tyr711 bears the Phosphotyrosine mark. Phosphoserine; by CK1 and PDPK1 is present on Ser713. Positions 715-734 are disordered; the sequence is VVSGDTSPRHLSNVSSTGSI. Position 717 is a phosphoserine; alternate (Ser717). Ser717 is a glycosylation site (O-linked (GlcNAc) serine; alternate). Over residues 718–733 the composition is skewed to polar residues; that stretch reads GDTSPRHLSNVSSTGS. Thr720 carries the post-translational modification Phosphothreonine. Ser721 bears the Phosphoserine; by CK1 and PDPK1 mark. Ser726 bears the Phosphoserine mark. Phosphoserine; by CaMK2 and TTBK1 is present on Ser733. A Phosphoserine; by PDPK1 and TTBK1 modification is found at Ser739. Residue Thr744 is modified to Phosphothreonine; by TTBK1.

As to quaternary structure, interacts with MARK1, MARK2, MARK3 and MARK4. Interacts with PSMC2 through SQSTM1. Interacts with SQSTM1 when polyubiquitinated. Interacts with FKBP4. Binds to CSNK1D. Interacts with SGK1. Interacts with EPM2A; the interaction dephosphorylates MAPT at Ser-396. Interacts with PIN1. Interacts with LRRK2. Interacts with LRP1, leading to endocytosis; this interaction is reduced in the presence of LRPAP1/RAP. Phosphorylation at serine and threonine residues in S-P or T-P motifs by proline-directed protein kinases (PDPK1, CDK1, CDK5, GSK3, MAPK) (only 2-3 sites per protein in interphase, seven-fold increase in mitosis, and in the form associated with paired helical filaments (PHF-tau)), and at serine residues in K-X-G-S motifs by MAP/microtubule affinity-regulating kinase (MARK1, MARK2, MARK3 or MARK4), causing detachment from microtubules, and their disassembly. Phosphorylation decreases with age. Phosphorylation within tau/MAP's repeat domain or in flanking regions seems to reduce tau/MAP's interaction with, respectively, microtubules or plasma membrane components. Phosphorylation on Ser-610, Ser-622, Ser-641 and Ser-673 in several isoforms during mitosis. Phosphorylation at Ser-548 by GSK3B reduces ability to bind and stabilize microtubules. Phosphorylation at Ser-579 by BRSK1 and BRSK2 in neurons affects ability to bind microtubules and plays a role in neuron polarization. Phosphorylated at Ser-554, Ser-579, Ser-602, Ser-606 and Ser-669 by PHK. Phosphorylation at Ser-214 by SGK1 mediates microtubule depolymerization and neurite formation in hippocampal neurons. There is a reciprocal down-regulation of phosphorylation and O-GlcNAcylation. Phosphorylation on Ser-717 completely abolishes the O-GlcNAcylation on this site, while phosphorylation on Ser-713 and Ser-721 reduces glycosylation by a factor of 2 and 4 respectively. Phosphorylation on Ser-721 is reduced by about 41.5% by GlcNAcylation on Ser-717. Dephosphorylated at several serine and threonine residues by the serine/threonine phosphatase PPP5C. In terms of processing, polyubiquitinated. Requires functional TRAF6 and may provoke SQSTM1-dependent degradation by the proteasome. PHF-tau can be modified by three different forms of polyubiquitination. 'Lys-48'-linked polyubiquitination is the major form, 'Lys-6'-linked and 'Lys-11'-linked polyubiquitination also occur. Post-translationally, O-glycosylated. O-GlcNAcylation content is around 8.2%. There is reciprocal down-regulation of phosphorylation and O-GlcNAcylation. Phosphorylation on Ser-717 completely abolishes the O-GlcNAcylation on this site, while phosphorylation on Ser-713 and Ser-721 reduces O-GlcNAcylation by a factor of 2 and 4 respectively. O-GlcNAcylation on Ser-717 decreases the phosphorylation on Ser-721 by about 41.5%. Glycation of PHF-tau, but not normal brain TAU/MAPT. Glycation is a non-enzymatic post-translational modification that involves a covalent linkage between a sugar and an amino group of a protein molecule forming ketoamine. Subsequent oxidation, fragmentation and/or cross-linking of ketoamine leads to the production of advanced glycation endproducts (AGES). Glycation may play a role in stabilizing PHF aggregation leading to tangle formation in AD. In terms of tissue distribution, expressed in neurons. Isoform PNS-tau is expressed in the peripheral nervous system while the others are expressed in the central nervous system.

The protein resides in the cytoplasm. It localises to the cytosol. The protein localises to the cell membrane. It is found in the cytoskeleton. Its subcellular location is the cell projection. The protein resides in the axon. It localises to the dendrite. The protein localises to the secreted. Its function is as follows. Promotes microtubule assembly and stability, and might be involved in the establishment and maintenance of neuronal polarity. The C-terminus binds axonal microtubules while the N-terminus binds neural plasma membrane components, suggesting that tau functions as a linker protein between both. Axonal polarity is predetermined by TAU/MAPT localization (in the neuronal cell) in the domain of the cell body defined by the centrosome. The short isoforms allow plasticity of the cytoskeleton whereas the longer isoforms may preferentially play a role in its stabilization. In Homo sapiens (Human), this protein is Microtubule-associated protein tau.